Reading from the N-terminus, the 229-residue chain is Large ribosomal subunit protein uL1 (229 aa).

This sequence belongs to the universal ribosomal protein uL1 family. In terms of assembly, part of the 50S ribosomal subunit.

Functionally, binds directly to 23S rRNA. The L1 stalk is quite mobile in the ribosome, and is involved in E site tRNA release. In terms of biological role, protein L1 is also a translational repressor protein, it controls the translation of the L11 operon by binding to its mRNA. This Ureaplasma parvum serovar 3 (strain ATCC 27815 / 27 / NCTC 11736) protein is Large ribosomal subunit protein uL1.